The chain runs to 600 residues: MDISKIRNFSIIAHIDHGKSTLADRLLEYTGALTAREMQSQFLDKMDLERERGITIKAQTVRLNYTADDGNTYVLNLIDTPGHVDFTYEVSRSLAACEGGLLVVDASQGVEAQTLANVYLALDNDLEVFPVLNKIDLPAAEPERVKHEIEEIIGIDAHDAVLASAKEGIGTREILEEIVKKIPAPQGDVAAPLKALLFDSWYDQYQGVIILVRLFEGSLKKGDKIQLMSTNKAYEALKVGVFSPVMVEVPQLTAGEVGFVIAGIKDVADAKVGDTVTLLHRQCAEMLGGFKEVKPMVFSGLYPIDTAQYEQLRDALAKLKLNDSSFSFEPETSVALGFGFRCGFLGLLHMEIIQERLEREFGLDLITTAPTVVYRVHKMNGDVYSIQSANQMPELQSTEYLEEPFILAHIHVPNDYVGGVLALCEDKRGVQREIKYLTPTRVMIIYELPLNEIVLDFYDRLKSITKGYASLDYEHLEYRRSDLVRMNVLINGEVVDALSLILHRDKAYFRGRDLVSKMKELISRQMFEVAIQAAIGSKIIARETVKAMRKDVLAKCYGGDITRKRKLLEKQKEGKKRMKNVGNVELPQEAFLAILKVDDK.

In terms of domain architecture, tr-type G spans 4–186 (SKIRNFSIIA…EIVKKIPAPQ (183 aa)). GTP is bound by residues 16 to 21 (DHGKST) and 133 to 136 (NKID).

This sequence belongs to the TRAFAC class translation factor GTPase superfamily. Classic translation factor GTPase family. LepA subfamily.

The protein resides in the cell inner membrane. It catalyses the reaction GTP + H2O = GDP + phosphate + H(+). Its function is as follows. Required for accurate and efficient protein synthesis under certain stress conditions. May act as a fidelity factor of the translation reaction, by catalyzing a one-codon backward translocation of tRNAs on improperly translocated ribosomes. Back-translocation proceeds from a post-translocation (POST) complex to a pre-translocation (PRE) complex, thus giving elongation factor G a second chance to translocate the tRNAs correctly. Binds to ribosomes in a GTP-dependent manner. The chain is Elongation factor 4 from Trichlorobacter lovleyi (strain ATCC BAA-1151 / DSM 17278 / SZ) (Geobacter lovleyi).